We begin with the raw amino-acid sequence, 901 residues long: Protein translocase subunit SecA (901 aa).

Residues Gln85, 103 to 107 (GEGKT), and Asp510 contribute to the ATP site. The tract at residues 848 to 901 (RINQNNLPVDENSQTTQNSETEDYSDRRIGRNEPCPCGSGKKYKHCHGSRVARQ) is disordered. The span at 849-866 (INQNNLPVDENSQTTQNS) shows a compositional bias: polar residues. Zn(2+) is bound by residues Cys882, Cys884, Cys893, and His894. Basic residues predominate over residues 888–901 (KKYKHCHGSRVARQ).

This sequence belongs to the SecA family. In terms of assembly, monomer and homodimer. Part of the essential Sec protein translocation apparatus which comprises SecA, SecYEG and auxiliary proteins SecDF-YajC and YidC. Requires Zn(2+) as cofactor.

The protein localises to the cell inner membrane. The protein resides in the cytoplasm. It carries out the reaction ATP + H2O + cellular proteinSide 1 = ADP + phosphate + cellular proteinSide 2.. Part of the Sec protein translocase complex. Interacts with the SecYEG preprotein conducting channel. Has a central role in coupling the hydrolysis of ATP to the transfer of proteins into and across the cell membrane, serving both as a receptor for the preprotein-SecB complex and as an ATP-driven molecular motor driving the stepwise translocation of polypeptide chains across the membrane. The polypeptide is Protein translocase subunit SecA (Haemophilus influenzae (strain 86-028NP)).